The primary structure comprises 324 residues: NADH-ubiquinone oxidoreductase chain 1 (324 aa).

Helical transmembrane passes span 9 to 29 (LTMALSYAVPILIAVAFLTLV), 75 to 95 (ILFIATPILALLLAITIWIPL), 106 to 126 (LGLLFLLSMSSLAVYSILWSG), 142 to 162 (VAQTISYEVTLAIILLSVIML), 177 to 197 (PLYLIFSTWPLAMMWYISTLA), 228 to 248 (LFFLAEYANIMLMNTLTAILF), 259 to 279 (ELFPLILATKTLLLSSGFLWV), and 300 to 320 (LPLTLALCLWHTSLPISYAGI).

This sequence belongs to the complex I subunit 1 family.

It localises to the mitochondrion inner membrane. It carries out the reaction a ubiquinone + NADH + 5 H(+)(in) = a ubiquinol + NAD(+) + 4 H(+)(out). Functionally, core subunit of the mitochondrial membrane respiratory chain NADH dehydrogenase (Complex I) that is believed to belong to the minimal assembly required for catalysis. Complex I functions in the transfer of electrons from NADH to the respiratory chain. The immediate electron acceptor for the enzyme is believed to be ubiquinone. The polypeptide is NADH-ubiquinone oxidoreductase chain 1 (MT-ND1) (Struthio camelus (Common ostrich)).